The following is a 299-amino-acid chain: Fluorinase (299 aa).

S-adenosyl-L-methionine-binding positions include D15, 20-22 (DDS), Y76, S157, D210, N215, 269-270 (SR), and 277-279 (RNA).

This sequence belongs to the SAM hydrolase / SAM-dependent halogenase family.

It carries out the reaction fluoride + S-adenosyl-L-methionine = 5'-deoxy-5'-fluoroadenosine + L-methionine. Its activity is regulated as follows. Activity is not severely affected by most metal ions (Mg(2+), Mn(2+), Co(2+) and Fe(2+)), but both Cu(2+) and Zn(2+) are strong inhibitors. Functionally, catalyzes the formation of a C-F bond by combining S-adenosyl-L-methionine (SAM) and fluoride to generate 5'-fluoro-5'-deoxyadenosine (5'-FDA) and L-methionine. The polypeptide is Fluorinase (Actinopolyspora mzabensis).